The chain runs to 199 residues: dCTP deaminase (199 aa).

Residues 110–115 (RSSLAR), Asp-128, 136–138 (VLE), Tyr-171, and Gln-182 contribute to the dCTP site. Glu-138 serves as the catalytic Proton donor/acceptor.

Belongs to the dCTP deaminase family. As to quaternary structure, homotrimer.

The catalysed reaction is dCTP + H2O + H(+) = dUTP + NH4(+). The protein operates within pyrimidine metabolism; dUMP biosynthesis; dUMP from dCTP (dUTP route): step 1/2. Functionally, catalyzes the deamination of dCTP to dUTP. The sequence is that of dCTP deaminase from Pseudoalteromonas atlantica (strain T6c / ATCC BAA-1087).